The primary structure comprises 529 residues: Ell-associated factor Eaf (529 aa).

Disordered regions lie at residues Ala155 to Thr235 and Ala253 to Asp529. Polar residues predominate over residues Glu167 to Asn186. Low complexity-rich tracts occupy residues Arg194–Ser215, Ser256–Gly265, His306–Asn315, and Gln327–Gln346. Ser196 is subject to Phosphoserine. Over residues Arg347–Met359 the composition is skewed to polar residues. Residues Asp401–Asp416 show a composition bias toward acidic residues. 4 stretches are compositionally biased toward low complexity: residues His431–Gln451, Gln469–Gln480, Gln488–Ser499, and Asn510–Ser523.

Belongs to the EAF family.

The protein resides in the nucleus. In terms of biological role, promotes transcriptional elongation by Su(Tpl)/ELL. Essential for development. This is Ell-associated factor Eaf from Drosophila grimshawi (Hawaiian fruit fly).